Consider the following 284-residue polypeptide: Shikimate dehydrogenase (NADP(+)) (284 aa).

Shikimate is bound by residues Ser-20–Ser-22 and Ser-67. The active-site Proton acceptor is the Lys-71. Asp-83 contacts NADP(+). Residues Asn-92 and Asp-107 each coordinate shikimate. Residues Gly-129–Ala-133 and Ile-227 each bind NADP(+). Position 229 (Tyr-229) interacts with shikimate. An NADP(+)-binding site is contributed by Gly-250.

It belongs to the shikimate dehydrogenase family. In terms of assembly, homodimer.

It carries out the reaction shikimate + NADP(+) = 3-dehydroshikimate + NADPH + H(+). The protein operates within metabolic intermediate biosynthesis; chorismate biosynthesis; chorismate from D-erythrose 4-phosphate and phosphoenolpyruvate: step 4/7. In terms of biological role, involved in the biosynthesis of the chorismate, which leads to the biosynthesis of aromatic amino acids. Catalyzes the reversible NADPH linked reduction of 3-dehydroshikimate (DHSA) to yield shikimate (SA). The chain is Shikimate dehydrogenase (NADP(+)) from Streptococcus pneumoniae (strain 70585).